An 86-amino-acid polypeptide reads, in one-letter code: Small ribosomal subunit protein bS20 (86 aa).

The protein belongs to the bacterial ribosomal protein bS20 family.

In terms of biological role, binds directly to 16S ribosomal RNA. The chain is Small ribosomal subunit protein bS20 from Arthrobacter sp. (strain FB24).